Here is a 427-residue protein sequence, read N- to C-terminus: Glutamate-1-semialdehyde 2,1-aminomutase (427 aa).

Lys-267 bears the N6-(pyridoxal phosphate)lysine mark.

It belongs to the class-III pyridoxal-phosphate-dependent aminotransferase family. HemL subfamily. In terms of assembly, homodimer. Requires pyridoxal 5'-phosphate as cofactor.

The protein localises to the cytoplasm. It catalyses the reaction (S)-4-amino-5-oxopentanoate = 5-aminolevulinate. It participates in porphyrin-containing compound metabolism; protoporphyrin-IX biosynthesis; 5-aminolevulinate from L-glutamyl-tRNA(Glu): step 2/2. The chain is Glutamate-1-semialdehyde 2,1-aminomutase from Syntrophotalea carbinolica (strain DSM 2380 / NBRC 103641 / GraBd1) (Pelobacter carbinolicus).